The sequence spans 502 residues: ATP synthase subunit alpha (502 aa).

Residues 115-137 (VDGLGPVETTETRPIESPAPGVM) form a disordered region. 169 to 176 (GDRQTGKT) is a binding site for ATP.

It belongs to the ATPase alpha/beta chains family. F-type ATPases have 2 components, CF(1) - the catalytic core - and CF(0) - the membrane proton channel. CF(1) has five subunits: alpha(3), beta(3), gamma(1), delta(1), epsilon(1). CF(0) has three main subunits: a(1), b(2) and c(9-12). The alpha and beta chains form an alternating ring which encloses part of the gamma chain. CF(1) is attached to CF(0) by a central stalk formed by the gamma and epsilon chains, while a peripheral stalk is formed by the delta and b chains.

It is found in the cell membrane. The catalysed reaction is ATP + H2O + 4 H(+)(in) = ADP + phosphate + 5 H(+)(out). In terms of biological role, produces ATP from ADP in the presence of a proton gradient across the membrane. The alpha chain is a regulatory subunit. In Geobacillus kaustophilus (strain HTA426), this protein is ATP synthase subunit alpha.